Consider the following 202-residue polypeptide: Small ribosomal subunit protein uS4 (202 aa).

Residues 15–42 are disordered; sequence LGDLPGLTRKAAKRSYPPGQHGQARRKR. Residues 90–152 form the S4 RNA-binding domain; it reads NRLDNVCFRL…KCSKQLAEGN (63 aa).

Belongs to the universal ribosomal protein uS4 family. As to quaternary structure, part of the 30S ribosomal subunit. Contacts protein S5. The interaction surface between S4 and S5 is involved in control of translational fidelity.

Its function is as follows. One of the primary rRNA binding proteins, it binds directly to 16S rRNA where it nucleates assembly of the body of the 30S subunit. With S5 and S12 plays an important role in translational accuracy. The sequence is that of Small ribosomal subunit protein uS4 from Synechococcus sp. (strain WH7803).